Consider the following 304-residue polypeptide: N-carbamoyl-D-amino acid hydrolase (304 aa).

The 272-residue stretch at 5 to 276 (MILAVGQQGP…DEVITAAVCL (272 aa)) folds into the CN hydrolase domain. Active-site residues include glutamate 47, lysine 127, and cysteine 172.

As to quaternary structure, homotetramer.

The catalysed reaction is an N-carbamoyl-D-amino acid + H2O + 2 H(+) = a D-alpha-amino acid + NH4(+) + CO2. The activity decreases with increasing concentration of H(2)O(2). Has 68% and 43% of activity remaining upon treatment with 0.1 and 0.2 mM H(2)O(2) for 30 minutes, respectively. Inhibited significantly by 2 mM Zn(2+), Cu(2+) and Ag(+), moderately by Co(2+), Mn(2+), Sn(2+) and Mg(2+), and only slightly by Ba(2+). Slightly activated by Fe(2+) and Ca(2+). No effect on activity by metal chelators EDTA and 8-hydroxyquinoline at 2 mM or by dithiothreitol, 2-mercaptoethanol or phenylmethanesulfonyl fluoride. Functionally, catalyzes the hydrolysis of N-carbamoyl-D-amino acids to the corresponding D-amino acids. Hydrolyzes aromatic and aliphatic N-carbamoyl-D-amino acids in vitro. Effectively hydrolyzes N-carbamoyl-D-p-hydroxyphenylglycine and N-carbamoyl-DL-p-hydroxyphenylglycine, and to a lesser extent N-carbamoyl-D-methionine. No activity for N-carbamoyl-L-amino acids, N-carbamoyl-beta-alanine or (RS)-alpha-ethyl-N-carbamoylphenylglycine in vitro. In Ensifer adhaerens (Sinorhizobium morelense), this protein is N-carbamoyl-D-amino acid hydrolase.